A 428-amino-acid chain; its full sequence is Adenylosuccinate synthetase (428 aa).

GTP is bound by residues 12 to 18 (GDEGKGK) and 40 to 42 (GHS). Asp13 functions as the Proton acceptor in the catalytic mechanism. The Mg(2+) site is built by Asp13 and Gly40. IMP-binding positions include 13 to 16 (DEGK), 38 to 41 (NAGH), Thr128, Arg142, Gln223, Thr238, and Arg302. Catalysis depends on His41, which acts as the Proton donor. 298 to 304 (VTTGRPR) lines the substrate pocket. GTP contacts are provided by residues Arg304, 330–332 (KLD), and 412–414 (GTG).

This sequence belongs to the adenylosuccinate synthetase family. Homodimer. Mg(2+) serves as cofactor.

It is found in the cytoplasm. It catalyses the reaction IMP + L-aspartate + GTP = N(6)-(1,2-dicarboxyethyl)-AMP + GDP + phosphate + 2 H(+). The protein operates within purine metabolism; AMP biosynthesis via de novo pathway; AMP from IMP: step 1/2. Functionally, plays an important role in the de novo pathway of purine nucleotide biosynthesis. Catalyzes the first committed step in the biosynthesis of AMP from IMP. The polypeptide is Adenylosuccinate synthetase (Bifidobacterium longum subsp. infantis (strain ATCC 15697 / DSM 20088 / JCM 1222 / NCTC 11817 / S12)).